We begin with the raw amino-acid sequence, 61 residues long: Small ribosomal subunit protein uS14B (61 aa).

4 residues coordinate Zn(2+): C24, C27, C40, and C43.

Belongs to the universal ribosomal protein uS14 family. Zinc-binding uS14 subfamily. As to quaternary structure, part of the 30S ribosomal subunit. Contacts proteins S3 and S10. Requires Zn(2+) as cofactor.

Its function is as follows. Binds 16S rRNA, required for the assembly of 30S particles and may also be responsible for determining the conformation of the 16S rRNA at the A site. The polypeptide is Small ribosomal subunit protein uS14B (Ligilactobacillus salivarius (strain UCC118) (Lactobacillus salivarius)).